The chain runs to 246 residues: uncharacterized protein (246 aa).

The disordered stretch occupies residues 120-149 (EKCAGETSPYTSASVSNSKKATSSSNFTKS). Residues 130 to 149 (TSASVSNSKKATSSSNFTKS) show a composition bias toward low complexity.

This is an uncharacterized protein from Caenorhabditis elegans.